Consider the following 31-residue polypeptide: Photosystem II reaction center protein T (31 aa).

Residues 3 to 23 (AFTYTLLMTLGVVTLFFAVAF) form a helical membrane-spanning segment.

The protein belongs to the PsbT family. PSII is composed of 1 copy each of membrane proteins PsbA, PsbB, PsbC, PsbD, PsbE, PsbF, PsbH, PsbI, PsbJ, PsbK, PsbL, PsbM, PsbT, PsbX, PsbY, Psb30/Ycf12, peripheral proteins PsbO, CyanoQ (PsbQ), PsbU, PsbV and a large number of cofactors. It forms dimeric complexes.

The protein localises to the cellular thylakoid membrane. Functionally, found at the monomer-monomer interface of the photosystem II (PS II) dimer, plays a role in assembly and dimerization of PSII. PSII is a light-driven water plastoquinone oxidoreductase, using light energy to abstract electrons from H(2)O, generating a proton gradient subsequently used for ATP formation. The sequence is that of Photosystem II reaction center protein T from Prochlorococcus marinus (strain SARG / CCMP1375 / SS120).